The primary structure comprises 102 residues: MDIDALSLNELKALRSKVDRAIVTYEERKKKEAFAELDEIARKMGYPLAEILTMVETKPRKTVAAKYANPANPSETWTGRGRKPKWVEAALASGKSLEDLTI.

The DNA-binding element occupies 80 to 85; it reads RGRKPK.

It belongs to the histone-like protein H-NS family. In terms of assembly, homodimer that oligomerizes on DNA into higher-order complexes that form bridges between disparate regions of DNA compacting it.

It is found in the cytoplasm. The protein resides in the nucleoid. Its function is as follows. A dim-light trans-acting activator of Puf and Puh expression, that has no effect on the expression of the Puc operon. Responsible for regulating light-harvesting-I and reaction center structural gene expression differentially from that of light-harvesting-II expression in response to alterations in light. Proper light regulation of light-harvesting and reaction center polypeptide synthesis is an important physiological trait that enables cells to adapt to ever-changing environmental conditions of light intensity. The protein is Trans-acting regulatory protein HvrA (hvrA) of Rhodobacter capsulatus (Rhodopseudomonas capsulata).